We begin with the raw amino-acid sequence, 223 residues long: MASSQQAVRETGRGRASSSSAGGRKVTFGYHLVEGKTPHGMEDLHVAEFRRLDDGNEDGGDGGSTAVTAILINGETLAVANVGDSRAVAFDVRAGRAQQLSVDHEPLRERDAIEHCGGFVTEIHGDVPRVDAQLATSRAFGDRQIKEHISSDPNVTIEDVGGRRRRWWHGARRPRQRRGVEECFLQRLAEYAICIHGASMEHRNFHVHSSHVHYFEIPPFKEV.

Residues 1–22 (MASSQQAVRETGRGRASSSSAG) are disordered. A PPM-type phosphatase domain is found at 1 to 212 (MASSQQAVRE…RNFHVHSSHV (212 aa)).

Belongs to the PP2C family.

The catalysed reaction is O-phospho-L-seryl-[protein] + H2O = L-seryl-[protein] + phosphate. It carries out the reaction O-phospho-L-threonyl-[protein] + H2O = L-threonyl-[protein] + phosphate. The polypeptide is Putative protein phosphatase 2C 63 (Oryza sativa subsp. japonica (Rice)).